The following is a 728-amino-acid chain: Protein psiK (728 aa).

Positions 1–20 (MKKTFIFLYCVVLFISTTLA) are cleaved as a signal peptide. Over 21–666 (VEMKKTQDFN…FICKTAAVVS (646 aa)) the chain is Extracellular. 3 N-linked (GlcNAc...) asparagine glycosylation sites follow: Asn61, Asn74, and Asn104. One can recognise a PA14 domain in the interval 118 to 266 (MNLDDKSNYF…YDFCGVCTGN (149 aa)). Asn272, Asn326, Asn335, Asn438, Asn543, and Asn638 each carry an N-linked (GlcNAc...) asparagine glycan. Residues 667–687 (VGVAVGVAVGGAIALGVFIFA) form a helical membrane-spanning segment. The Cytoplasmic portion of the chain corresponds to 688–728 (GKKGYDYWKASQGVTMATSNANPLYESNPSGGENPIYTSPN).

The protein belongs to the prespore-cell-inducing factor family.

The protein resides in the membrane. The sequence is that of Protein psiK (psiK) from Dictyostelium discoideum (Social amoeba).